The sequence spans 124 residues: uncharacterized protein (124 aa).

A disordered region spans residues 82 to 124 (SDLGIEGGERAQGQNAHSVHGPGLQTERGGSQLQMVGHPLREL).

This is an uncharacterized protein from Human cytomegalovirus (strain AD169) (HHV-5).